A 186-amino-acid polypeptide reads, in one-letter code: uncharacterized protein (186 aa).

This is an uncharacterized protein from Methanocaldococcus jannaschii (strain ATCC 43067 / DSM 2661 / JAL-1 / JCM 10045 / NBRC 100440) (Methanococcus jannaschii).